The primary structure comprises 1102 residues: Voltage-gated delayed rectifier potassium channel KCNH8 (1102 aa).

Residues 1 to 225 (MPVMKGLLAP…HFSTFKAGWD (225 aa)) are Cytoplasmic-facing. In terms of domain architecture, PAS spans 18-90 (IATRFDGTHS…LQIEKSLEEK (73 aa)). A PAC domain is found at 93–145 (FKGEIMFYKKNGAPFWCLLDIVPIKNEKGDVVLFLASFKDITDTKVKITSEDK). A helical transmembrane segment spans residues 226–246 (WLILLATFYVAVTVPYNVCFI). Topologically, residues 247–255 (GNEDLSTTR) are extracellular. The chain crosses the membrane as a helical span at residues 256 to 276 (STTVSDIAVEILFIIDIILNF). Residues 277 to 298 (RTTYVSKSGQVIFEARSICIHY) lie on the Cytoplasmic side of the membrane. The helical transmembrane segment at 299–319 (VTTWFIIDLIAALPFDLLYAF) threads the bilayer. Asparagine 320 is a glycosylation site (N-linked (GlcNAc...) asparagine). Topologically, residues 320–327 (NVTVVSLV) are extracellular. A helical; Voltage-sensor transmembrane segment spans residues 328 to 348 (HLLKTVRLLRLLRLLQKLDRY). Residues 349-353 (SQHST) are Cytoplasmic-facing. The chain crosses the membrane as a helical span at residues 354–374 (IVLTLLMSMFALLAHWMACIW). The Extracellular portion of the chain corresponds to 375 to 419 (YVIGKMEREDNSLLKWEVGWLHELGKRLESPYYGNNTLGGPSIRS). Asparagine 409 carries N-linked (GlcNAc...) asparagine glycosylation. Positions 420–440 (AYIAALYFTLSSLTSVGFGNV) form an intramembrane region, pore-forming. Positions 434–439 (SVGFGN) match the Selectivity filter motif. At 441-448 (SANTDAEK) the chain is on the extracellular side. The chain crosses the membrane as a helical span at residues 449–469 (IFSICTMLIGALMHALVFGNV). Topologically, residues 470-1102 (TAIIQRMYSR…DVKDSKAINV (633 aa)) are cytoplasmic. The segment at 551-668 (LFECASRGCL…HKFVEDIQHD (118 aa)) is cNMP-binding domain. 4 disordered regions span residues 683–744 (SRLS…KTGS), 762–793 (PFHS…KEKN), 818–845 (EDGN…ISPS), and 960–983 (LVGS…LHHS). The segment covering 710–723 (VEDEEEEEVEEEET) has biased composition (acidic residues). The segment covering 777–793 (TKQEADPPNHGTRKEKN) has biased composition (basic and acidic residues). Over residues 968 to 982 (TEAHEQSPVDSELHH) the composition is skewed to basic and acidic residues.

Belongs to the potassium channel family. H (Eag) (TC 1.A.1.20) subfamily. Kv12.1/KCNH8 sub-subfamily. In terms of assembly, the potassium channel is probably composed of a homo- or heterotetrameric complex of pore-forming alpha subunits that can associate with modulating beta subunits. As to expression, detected in superior cervical, mesenteric and coeliac ganglia. Expressed in brain (piriform cortex, olfactory tubercle, cerebral cortex, hippocampus pyramidial cells and dentate gyrus and basal ganglia of caudate/putamen and accumbens nucleus). Expressed in pituitary.

It localises to the membrane. It catalyses the reaction K(+)(in) = K(+)(out). Pore-forming (alpha) subunit of a voltage-gated delayed rectifier potassium channel that mediates outward-rectifying potassium currents. Elicits a slowly activating, non-inactivating and slowly deactivation outwards potassium current at depolarizating voltages from -30 mV to +50mV. Shows no obvious change in the activation rate from different holding potentials. Activation is strongly dependent on the pH of the external solution. This Rattus norvegicus (Rat) protein is Voltage-gated delayed rectifier potassium channel KCNH8.